The primary structure comprises 185 residues: Translation initiation factor IF-3 (185 aa).

The protein belongs to the IF-3 family. As to quaternary structure, monomer.

The protein resides in the cytoplasm. In terms of biological role, IF-3 binds to the 30S ribosomal subunit and shifts the equilibrium between 70S ribosomes and their 50S and 30S subunits in favor of the free subunits, thus enhancing the availability of 30S subunits on which protein synthesis initiation begins. The polypeptide is Translation initiation factor IF-3 (Rickettsia felis (strain ATCC VR-1525 / URRWXCal2) (Rickettsia azadi)).